A 288-amino-acid polypeptide reads, in one-letter code: Ribosome biogenesis GTPase A (288 aa).

The CP-type G domain maps to 14–179; that stretch reads RRQVTEKLKL…LLDTPGILWP (166 aa). GTP contacts are provided by residues 58-61, 131-136, and glycine 175; these read NKVD and NVGKST.

It belongs to the TRAFAC class YlqF/YawG GTPase family. MTG1 subfamily. As to quaternary structure, interacts with ctc. Interacts with the immature 50S ribosome subunit. 2 molecules of rbgA bind to one 50S subunit.

The protein localises to the cytoplasm. Functionally, essential protein that is required for a late step of 50S ribosomal subunit assembly. Has GTPase activity that is stimulated by interaction with the immature 50S ribosome subunit. Binds to the 23S rRNA. Required for the association of ribosomal proteins rplP and rpmA with the large subunit. In Priestia megaterium (strain DSM 319 / IMG 1521) (Bacillus megaterium), this protein is Ribosome biogenesis GTPase A.